The following is a 445-amino-acid chain: Argininosuccinate synthase (445 aa).

ATP-binding positions include A17 to S25 and A43. Y99 provides a ligand contact to L-citrulline. Residues G129 and T131 each coordinate ATP. T131, N135, and D136 together coordinate L-aspartate. N135 serves as a coordination point for L-citrulline. Residue D136 participates in ATP binding. Positions 139 and 192 each coordinate L-citrulline. Position 194 (D194) interacts with ATP. Residues T201, E203, and E280 each coordinate L-citrulline.

It belongs to the argininosuccinate synthase family. Type 2 subfamily. In terms of assembly, homotetramer.

Its subcellular location is the cytoplasm. It catalyses the reaction L-citrulline + L-aspartate + ATP = 2-(N(omega)-L-arginino)succinate + AMP + diphosphate + H(+). The protein operates within amino-acid biosynthesis; L-arginine biosynthesis; L-arginine from L-ornithine and carbamoyl phosphate: step 2/3. The protein is Argininosuccinate synthase (argG) of Bradyrhizobium diazoefficiens (strain JCM 10833 / BCRC 13528 / IAM 13628 / NBRC 14792 / USDA 110).